The sequence spans 207 residues: Small ribosomal subunit protein uS4 (207 aa).

The region spanning 97–159 (SRLDNVCYRM…AKSQLRIQAA (63 aa)) is the S4 RNA-binding domain.

Belongs to the universal ribosomal protein uS4 family. As to quaternary structure, part of the 30S ribosomal subunit. Contacts protein S5. The interaction surface between S4 and S5 is involved in control of translational fidelity.

Functionally, one of the primary rRNA binding proteins, it binds directly to 16S rRNA where it nucleates assembly of the body of the 30S subunit. In terms of biological role, with S5 and S12 plays an important role in translational accuracy. The protein is Small ribosomal subunit protein uS4 of Halorhodospira halophila (strain DSM 244 / SL1) (Ectothiorhodospira halophila (strain DSM 244 / SL1)).